The following is a 235-amino-acid chain: Small ribosomal subunit protein uS2c (235 aa).

This sequence belongs to the universal ribosomal protein uS2 family.

The protein resides in the plastid. The protein localises to the chloroplast. The protein is Small ribosomal subunit protein uS2c (rps2) of Zygnema circumcarinatum (Green alga).